Consider the following 718-residue polypeptide: Sec-independent protein translocase protein TatCt (718 aa).

Helical transmembrane passes span 34-54 (VFIVFLVGFLGTFYALRLYVW), 84-104 (ILLQAKIGLVVGVLFALPPFI), 137-157 (LFAAGVAYGYFVFFPFTFAFL), 178-198 (FIFLLTLSFGLASQLPLAMTG), 214-231 (WRHAIVGIFAFGALFTPP), 234-254 (FTQIMWAVPVILLYAFSLYLA), 280-300 (LAGVGVVVGLLVYAFYEYGGV), and 325-345 (LGAFVVAGGFVGLAFGLAYLV). A disordered region spans residues 421–451 (REAEAADAEDEPGELEDRTTRAGGAFVSELT). Residues 425-434 (AADAEDEPGE) show a composition bias toward acidic residues. 6 helical membrane-spanning segments follow: residues 478–498 (AFWVVGWFMLVLATTFGWLYT), 539–559 (FSTILAVLATLPLVAYFVWPA), 572–592 (TVFVWTGALAGGLLGGFALGY), 621–641 (FFWLIFFTTAGIGLLADVPIL), 661–681 (EVTVFILAISAVFTPASITTM), and 682–702 (FMVTLPLMAAYGVGLGVLFVL).

It belongs to the TatC family. Forms a complex with TatA.

Its subcellular location is the cell membrane. Its function is as follows. Part of the twin-arginine translocation (Tat) system that transports large folded proteins containing a characteristic twin-arginine motif in their signal peptide across membranes. In Haloferax volcanii (strain ATCC 29605 / DSM 3757 / JCM 8879 / NBRC 14742 / NCIMB 2012 / VKM B-1768 / DS2) (Halobacterium volcanii), this protein is Sec-independent protein translocase protein TatCt.